The primary structure comprises 348 residues: UDP-N-acetylglucosamine--N-acetylmuramyl-(pentapeptide) pyrophosphoryl-undecaprenol N-acetylglucosamine transferase (348 aa).

Residues 11–13, N120, R161, S187, and Q281 contribute to the UDP-N-acetyl-alpha-D-glucosamine site; that span reads TGG.

It belongs to the glycosyltransferase 28 family. MurG subfamily.

The protein localises to the cell inner membrane. It carries out the reaction di-trans,octa-cis-undecaprenyl diphospho-N-acetyl-alpha-D-muramoyl-L-alanyl-D-glutamyl-meso-2,6-diaminopimeloyl-D-alanyl-D-alanine + UDP-N-acetyl-alpha-D-glucosamine = di-trans,octa-cis-undecaprenyl diphospho-[N-acetyl-alpha-D-glucosaminyl-(1-&gt;4)]-N-acetyl-alpha-D-muramoyl-L-alanyl-D-glutamyl-meso-2,6-diaminopimeloyl-D-alanyl-D-alanine + UDP + H(+). It participates in cell wall biogenesis; peptidoglycan biosynthesis. In terms of biological role, cell wall formation. Catalyzes the transfer of a GlcNAc subunit on undecaprenyl-pyrophosphoryl-MurNAc-pentapeptide (lipid intermediate I) to form undecaprenyl-pyrophosphoryl-MurNAc-(pentapeptide)GlcNAc (lipid intermediate II). The protein is UDP-N-acetylglucosamine--N-acetylmuramyl-(pentapeptide) pyrophosphoryl-undecaprenol N-acetylglucosamine transferase of Crocosphaera subtropica (strain ATCC 51142 / BH68) (Cyanothece sp. (strain ATCC 51142)).